The following is a 426-amino-acid chain: Gamma-glutamyl phosphate reductase (426 aa).

This sequence belongs to the gamma-glutamyl phosphate reductase family.

It localises to the cytoplasm. The enzyme catalyses L-glutamate 5-semialdehyde + phosphate + NADP(+) = L-glutamyl 5-phosphate + NADPH + H(+). It participates in amino-acid biosynthesis; L-proline biosynthesis; L-glutamate 5-semialdehyde from L-glutamate: step 2/2. Catalyzes the NADPH-dependent reduction of L-glutamate 5-phosphate into L-glutamate 5-semialdehyde and phosphate. The product spontaneously undergoes cyclization to form 1-pyrroline-5-carboxylate. This is Gamma-glutamyl phosphate reductase from Acidovorax ebreus (strain TPSY) (Diaphorobacter sp. (strain TPSY)).